Reading from the N-terminus, the 604-residue chain is Nuclear cap-binding protein subunit 3 (604 aa).

Residues 1-36 (MAAVRGLRISVKAEATATTAEPRGPEPEPMEVEEGE) form a disordered region. The RNA recognition motif (RRM) domain stretch occupies residues 116-177 (DTIYICGVDE…MSSFPDQEKP (62 aa)). The WLDD motif; essential for 7-methylguanosine-containing mRNA cap binding motif lies at 145–148 (WLDD). Disordered stretches follow at residues 168-219 (MSSF…DIEL), 319-383 (KHRH…DSDE), and 457-604 (QNNN…DTES). Residues 173–198 (DQEKPKGGENNEEKTAEKNKKEKQEE) show a composition bias toward basic and acidic residues. 2 stretches are compositionally biased toward acidic residues: residues 199-219 (STDDETEEGEVEDENPSDIEL) and 331-349 (EPIEEEEEEEEVQDMDEDD). A compositionally biased stretch (basic and acidic residues) spans 350–370 (RVVVEYRDDLQPFKQSRDRGA). A compositionally biased stretch (polar residues) spans 458–469 (NNNGLRQPNSIV). Basic and acidic residues-rich tracts occupy residues 495–505 (PRREPISDVHS), 539–548 (TQEKTSDKPE), and 569–582 (IKEKGESRQKKSRL). The segment covering 595–604 (ESSSGSDTES) has biased composition (low complexity).

This sequence belongs to the NCBP3 family. Component of an alternative cap-binding complex (CBC) composed of NCBP1/CBP80 and NCBP3.

It is found in the nucleus. Its subcellular location is the cytoplasm. Functionally, associates with NCBP1/CBP80 to form an alternative cap-binding complex (CBC) which plays a key role in mRNA export. NCBP3 serves as adapter protein linking the capped RNAs (m7GpppG-capped RNA) to NCBP1/CBP80. Unlike the conventional CBC with NCBP2 which binds both small nuclear RNA (snRNA) and messenger (mRNA) and is involved in their export from the nucleus, the alternative CBC with NCBP3 does not bind snRNA and associates only with mRNA thereby playing a role in only mRNA export. The chain is Nuclear cap-binding protein subunit 3 from Gallus gallus (Chicken).